A 151-amino-acid polypeptide reads, in one-letter code: Large ribosomal subunit protein bL9 (151 aa).

The protein belongs to the bacterial ribosomal protein bL9 family.

In terms of biological role, binds to the 23S rRNA. The polypeptide is Large ribosomal subunit protein bL9 (Prochlorococcus marinus (strain AS9601)).